The sequence spans 176 residues: ATP-dependent protease subunit HslV (176 aa).

The active site involves T6. Residues S161, C164, and T167 each coordinate Na(+).

Belongs to the peptidase T1B family. HslV subfamily. As to quaternary structure, a double ring-shaped homohexamer of HslV is capped on each side by a ring-shaped HslU homohexamer. The assembly of the HslU/HslV complex is dependent on binding of ATP.

Its subcellular location is the cytoplasm. It carries out the reaction ATP-dependent cleavage of peptide bonds with broad specificity.. Its activity is regulated as follows. Allosterically activated by HslU binding. Protease subunit of a proteasome-like degradation complex believed to be a general protein degrading machinery. In Thermosipho africanus (strain TCF52B), this protein is ATP-dependent protease subunit HslV.